A 453-amino-acid chain; its full sequence is Ribulose bisphosphate carboxylase large chain (453 aa).

The propeptide occupies 1–2; it reads MS. Proline 3 bears the N-acetylproline mark. Lysine 14 carries the N6,N6,N6-trimethyllysine modification. Residues asparagine 123 and threonine 173 each coordinate substrate. Lysine 175 (proton acceptor) is an active-site residue. Lysine 177 lines the substrate pocket. Positions 201, 203, and 204 each coordinate Mg(2+). The residue at position 201 (lysine 201) is an N6-carboxylysine. Residue histidine 294 is the Proton acceptor of the active site. Substrate contacts are provided by arginine 295, histidine 327, and serine 379.

This sequence belongs to the RuBisCO large chain family. Type I subfamily. As to quaternary structure, heterohexadecamer of 8 large chains and 8 small chains; disulfide-linked. The disulfide link is formed within the large subunit homodimers. The cofactor is Mg(2+). The disulfide bond which can form in the large chain dimeric partners within the hexadecamer appears to be associated with oxidative stress and protein turnover.

The protein resides in the plastid. It is found in the chloroplast. It catalyses the reaction 2 (2R)-3-phosphoglycerate + 2 H(+) = D-ribulose 1,5-bisphosphate + CO2 + H2O. The catalysed reaction is D-ribulose 1,5-bisphosphate + O2 = 2-phosphoglycolate + (2R)-3-phosphoglycerate + 2 H(+). In terms of biological role, ruBisCO catalyzes two reactions: the carboxylation of D-ribulose 1,5-bisphosphate, the primary event in carbon dioxide fixation, as well as the oxidative fragmentation of the pentose substrate in the photorespiration process. Both reactions occur simultaneously and in competition at the same active site. The sequence is that of Ribulose bisphosphate carboxylase large chain from Crucianella angustifolia (Narrow-leaved crosswort).